The chain runs to 456 residues: Palmitoyltransferase PFA4 (456 aa).

Residues 1–9 are Cytoplasmic-facing; sequence MAARNWSRV. A helical transmembrane segment spans residues 10–30; that stretch reads WVGGTVILISFIAFSSQIFVI. Residues 31 to 37 are Lumenal-facing; that stretch reads WPWYGRE. A helical membrane pass occupies residues 38-58; the sequence is ISLDLLMLLVPLNLAAFMIFW. Over 59–138 the chain is Cytoplasmic; that stretch reads NYRLCVITSP…GNCVGFYNQG (80 aa). In terms of domain architecture, DHHC spans 95–145; the sequence is RYCKNCAHYKPPRAHHCRQCKTCWLKLDHHCPWIGNCVGFYNQGHFIRFLL. The active-site S-palmitoyl cysteine intermediate is cysteine 125. The chain crosses the membrane as a helical span at residues 139-159; the sequence is HFIRFLLWVDIGTTFHLIIMV. At 160–176 the chain is on the lumenal side; that stretch reads RRVLYIAEYYHEPTLAD. The chain crosses the membrane as a helical span at residues 177–197; the sequence is VLFLVFNFATCVPVWLCVGMF. The Cytoplasmic portion of the chain corresponds to 198-456; sequence SIYHVYLACG…DPEEESGYTH (259 aa). The segment at 284–377 is disordered; it reads PPQDPSRLPN…YDHYDEGPMY (94 aa). Residues 285 to 298 are compositionally biased toward pro residues; that stretch reads PQDPSRLPNPPPIP. Polar residues predominate over residues 309-321; sequence NGFNPNLRPTNSL. Residues 337-352 show a composition bias toward basic and acidic residues; it reads SHEQGRHYSSGDERDN.

Belongs to the DHHC palmitoyltransferase family. PFA4 subfamily.

Its subcellular location is the endoplasmic reticulum membrane. The enzyme catalyses L-cysteinyl-[protein] + hexadecanoyl-CoA = S-hexadecanoyl-L-cysteinyl-[protein] + CoA. Its function is as follows. Mediates the reversible addition of palmitate to target proteins, thereby regulating their membrane association and biological function. Responsible for the modification of a subset of proteins that are critical in cryptococcal pathogenesis, with substrates involved in cell wall synthesis, signal transduction, and membrane trafficking. Palmitoylates chitin synthase CHS3. In Cryptococcus neoformans var. grubii serotype A (strain H99 / ATCC 208821 / CBS 10515 / FGSC 9487) (Filobasidiella neoformans var. grubii), this protein is Palmitoyltransferase PFA4.